The primary structure comprises 225 residues: DNA-binding response regulator MtrA (225 aa).

The Response regulatory domain occupies 4–117; sequence RILVVDDDAS…ELVARVRARL (114 aa). 4-aspartylphosphate is present on aspartate 53. The segment at residues 125–224 is a DNA-binding region (ompR/PhoB-type); it reads AEMLSIADVD…VRGVGYKAGP (100 aa).

Post-translationally, phosphorylated by MtrB.

Member of the two-component regulatory system MtrA/MtrB. In Mycobacterium leprae (strain TN), this protein is DNA-binding response regulator MtrA (mtrA).